Consider the following 52-residue polypeptide: Large ribosomal subunit protein bL33 (52 aa).

Belongs to the bacterial ribosomal protein bL33 family.

The protein is Large ribosomal subunit protein bL33 of Chlamydia trachomatis serovar A (strain ATCC VR-571B / DSM 19440 / HAR-13).